The following is a 103-amino-acid chain: Cell division suppressor protein YneA (103 aa).

Residues 36 to 87 form the LysM domain; sequence VKIKVQDGDTLWSLADHVAEKKHINKEDFIEWVTENNHLQTADIKPGDELIL.

This sequence belongs to the YneA family.

It localises to the cytoplasm. Its function is as follows. Inhibits cell division during the SOS response. Affects a later stage of the cell division protein assembly, after the assembly of the Z ring, by probably suppressing recruitment of FtsL and/or DivIC to the division machinery. This Bacillus velezensis (strain DSM 23117 / BGSC 10A6 / LMG 26770 / FZB42) (Bacillus amyloliquefaciens subsp. plantarum) protein is Cell division suppressor protein YneA.